Here is a 600-residue protein sequence, read N- to C-terminus: Putative acetyltransferase MPN_114 (600 aa).

H323 acts as the Proton acceptor in catalysis. 396–409 (TKPLIKAKGIKNSE) contributes to the CoA binding site.

It belongs to the carnitine/choline acetyltransferase family.

This is Putative acetyltransferase MPN_114 from Mycoplasma pneumoniae (strain ATCC 29342 / M129 / Subtype 1) (Mycoplasmoides pneumoniae).